We begin with the raw amino-acid sequence, 1449 residues long: Disease resistance protein RPP5 (1449 aa).

The 169-residue stretch at 10 to 178 (RRYDVFPSFS…KISNDVSNKL (169 aa)) folds into the TIR domain. Glu85 is an active-site residue. In terms of domain architecture, NB-ARC spans 192–446 (EAHIEAIKSV…IACLFNGFEV (255 aa)). LRR repeat units follow at residues 549-573 (MRNL…VYLP), 574-595 (LKLR…TFKA), 597-618 (YLVN…TLPL), 619-642 (GSLK…SNAR), 644-665 (LEEL…IQNA), 687-710 (MCNL…VYFP), 712-732 (KLRL…NFKV), 733-755 (EYLV…TQPL), 756-779 (GRLK…SLAI), 802-825 (AIKL…DLNL), 826-849 (ESLE…KMGC), 915-939 (LGSL…SKAT), 941-962 (LKHL…IGNL), 963-985 (QKLV…DVNL), 986-1011 (SSLE…SIKW), 1028-1052 (ATKL…IGNL), 1053-1077 (QNLR…NLSS), 1096-1119 (STNI…IEDF), and 1120-1143 (TRLR…IFRL).

As to quaternary structure, interacts with RSH1.

It carries out the reaction NAD(+) + H2O = ADP-D-ribose + nicotinamide + H(+). Functionally, TIR-NB-LRR receptor-like protein that confers resistance to the pathogen Hyaloperonospora arabidopsis isolate Noco2 (downy mildew disease). Confers resistance to H.arabidopsis isolates Emoy2, Emwa1 and Noco2. This Arabidopsis thaliana (Mouse-ear cress) protein is Disease resistance protein RPP5.